The following is a 196-amino-acid chain: Pyridoxal 5'-phosphate synthase subunit PdxT (196 aa).

47–49 is a binding site for L-glutamine; that stretch reads GES. C79 functions as the Nucleophile in the catalytic mechanism. L-glutamine contacts are provided by residues R106 and 134 to 135; that span reads IR. Active-site charge relay system residues include H170 and E172.

It belongs to the glutaminase PdxT/SNO family. In the presence of PdxS, forms a dodecamer of heterodimers. Only shows activity in the heterodimer.

It carries out the reaction aldehydo-D-ribose 5-phosphate + D-glyceraldehyde 3-phosphate + L-glutamine = pyridoxal 5'-phosphate + L-glutamate + phosphate + 3 H2O + H(+). It catalyses the reaction L-glutamine + H2O = L-glutamate + NH4(+). It participates in cofactor biosynthesis; pyridoxal 5'-phosphate biosynthesis. In terms of biological role, catalyzes the hydrolysis of glutamine to glutamate and ammonia as part of the biosynthesis of pyridoxal 5'-phosphate. The resulting ammonia molecule is channeled to the active site of PdxS. The chain is Pyridoxal 5'-phosphate synthase subunit PdxT from Halalkalibacterium halodurans (strain ATCC BAA-125 / DSM 18197 / FERM 7344 / JCM 9153 / C-125) (Bacillus halodurans).